The primary structure comprises 124 residues: Transmembrane protein 254 (124 aa).

A run of 3 helical transmembrane segments spans residues 16–36, 62–82, and 96–116; these read LFWV…IFWP, VHAW…YAIV, and LLWF…LIAF.

The protein resides in the membrane. The protein is Transmembrane protein 254 (TMEM254) of Bos taurus (Bovine).